Consider the following 152-residue polypeptide: MTCTDQKSHSQRALGTQTPALQGPQLLNTDPSSEETRPPHVNPDRLCHMEPANHFWHAGDLQAMISKEFHLAATQDDCRKGRTQEDILVPSSHPELFASVLPMAPEEAARLQQPQPLPPPSGIHLSASRTLAPTLLYSSPPSHSPFGLSSLI.

Residues 1-31 (MTCTDQKSHSQRALGTQTPALQGPQLLNTDP) show a composition bias toward polar residues. The segment at 1-42 (MTCTDQKSHSQRALGTQTPALQGPQLLNTDPSSEETRPPHVN) is disordered.

As to expression, expressed in skin. Also found in heart, placenta, liver, skeletal muscle and pancreas.

This is Psoriasis susceptibility 1 candidate gene 1 protein (PSORS1C1) from Homo sapiens (Human).